Here is a 351-residue protein sequence, read N- to C-terminus: Histidinol-phosphate aminotransferase (351 aa).

Residue Lys-213 is modified to N6-(pyridoxal phosphate)lysine.

This sequence belongs to the class-II pyridoxal-phosphate-dependent aminotransferase family. Histidinol-phosphate aminotransferase subfamily. As to quaternary structure, homodimer. It depends on pyridoxal 5'-phosphate as a cofactor.

It catalyses the reaction L-histidinol phosphate + 2-oxoglutarate = 3-(imidazol-4-yl)-2-oxopropyl phosphate + L-glutamate. It functions in the pathway amino-acid biosynthesis; L-histidine biosynthesis; L-histidine from 5-phospho-alpha-D-ribose 1-diphosphate: step 7/9. The chain is Histidinol-phosphate aminotransferase from Clostridium kluyveri (strain NBRC 12016).